A 194-amino-acid polypeptide reads, in one-letter code: Peptidyl-tRNA hydrolase (194 aa).

Y16 contributes to the tRNA binding site. Catalysis depends on H21, which acts as the Proton acceptor. TRNA contacts are provided by F67, N69, and N115.

This sequence belongs to the PTH family. Monomer.

It is found in the cytoplasm. The enzyme catalyses an N-acyl-L-alpha-aminoacyl-tRNA + H2O = an N-acyl-L-amino acid + a tRNA + H(+). Its function is as follows. Hydrolyzes ribosome-free peptidyl-tRNAs (with 1 or more amino acids incorporated), which drop off the ribosome during protein synthesis, or as a result of ribosome stalling. Functionally, catalyzes the release of premature peptidyl moieties from peptidyl-tRNA molecules trapped in stalled 50S ribosomal subunits, and thus maintains levels of free tRNAs and 50S ribosomes. This is Peptidyl-tRNA hydrolase from Citrobacter koseri (strain ATCC BAA-895 / CDC 4225-83 / SGSC4696).